The sequence spans 648 residues: Threonine--tRNA ligase (648 aa).

One can recognise a TGS domain in the interval 1 to 63 (MAQISLTFPD…TQDAAIAIHT (63 aa)). The tract at residues 247-544 (DHRKLGREMN…LIEEHAGKLP (298 aa)) is catalytic. Zn(2+) contacts are provided by Cys344, His395, and His521.

The protein belongs to the class-II aminoacyl-tRNA synthetase family. Homodimer. Zn(2+) serves as cofactor.

It is found in the cytoplasm. It catalyses the reaction tRNA(Thr) + L-threonine + ATP = L-threonyl-tRNA(Thr) + AMP + diphosphate + H(+). Functionally, catalyzes the attachment of threonine to tRNA(Thr) in a two-step reaction: L-threonine is first activated by ATP to form Thr-AMP and then transferred to the acceptor end of tRNA(Thr). Also edits incorrectly charged L-seryl-tRNA(Thr). In Ruegeria sp. (strain TM1040) (Silicibacter sp.), this protein is Threonine--tRNA ligase.